The following is a 517-amino-acid chain: MKRLALLSTSDKTGLIDLAKSLVTEFDYEIISSGGTAKTLKDAGIYVTKVSDYTGFPEILGGRVKTLHPRIHGGILARKDLPQDVEELNANNIRPIDLVVVNLYPFEETISKPEVTLAEAIEKIDIGGPAMLRASAKNFAHLTVLCNHFQYNSYLEELRKNAGEVSLEFRQKCALAGFKHTATYDQAIATYLQEQQTTSESEKSEKEIFFLSGKKIKTLRYGENPHQYATWYQRGINASGWGASKIIQGKELSYNNLVDLEAARRIIIEFSDAPTVAILKHTNPCGVAVDETILAAYERAFAGDSVSAFGGIVALNKSIDAATAKAMTKTFLECVVAPGCEPEAEKIFKSKSKLRVLISPYFKQSEPETIKVISGGFLVQDTDDTIDNYSDWKIVTEKQPTTEQIEELMFAWKVVKHVKSNAIVVTKNRATVGIGAGQMNRVGAVKIALEQAGEKAIGGVLASDAFFPFDDSVKTAAAAGVTAIIQPGGSLKDKDSIAAANELGLIMILTGIRHFLH.

Residues Met1–Cys146 form the MGS-like domain.

This sequence belongs to the PurH family.

It carries out the reaction (6R)-10-formyltetrahydrofolate + 5-amino-1-(5-phospho-beta-D-ribosyl)imidazole-4-carboxamide = 5-formamido-1-(5-phospho-D-ribosyl)imidazole-4-carboxamide + (6S)-5,6,7,8-tetrahydrofolate. The catalysed reaction is IMP + H2O = 5-formamido-1-(5-phospho-D-ribosyl)imidazole-4-carboxamide. The protein operates within purine metabolism; IMP biosynthesis via de novo pathway; 5-formamido-1-(5-phospho-D-ribosyl)imidazole-4-carboxamide from 5-amino-1-(5-phospho-D-ribosyl)imidazole-4-carboxamide (10-formyl THF route): step 1/1. Its pathway is purine metabolism; IMP biosynthesis via de novo pathway; IMP from 5-formamido-1-(5-phospho-D-ribosyl)imidazole-4-carboxamide: step 1/1. This Trichodesmium erythraeum (strain IMS101) protein is Bifunctional purine biosynthesis protein PurH.